A 385-amino-acid chain; its full sequence is Neuropeptide Y receptor type 2 (385 aa).

Over Met-1 to Gln-54 the chain is Extracellular. N-linked (GlcNAc...) asparagine glycosylation is present at Asn-11. A helical transmembrane segment spans residues Ile-55–Val-75. The Cytoplasmic segment spans residues Ile-76–Asn-90. Residues Phe-91–Thr-111 form a helical membrane-spanning segment. Over Leu-112 to His-128 the chain is Extracellular. A disulfide bridge links Cys-127 with Cys-207. Residues Leu-129–Ala-149 form a helical membrane-spanning segment. At Leu-150 to Ser-169 the chain is on the cytoplasmic side. A helical membrane pass occupies residues Phe-170–Phe-190. The Extracellular portion of the chain corresponds to Arg-191–Thr-221. Residues Ile-222–Ala-242 form a helical membrane-spanning segment. Residues Tyr-243–Met-273 are Cytoplasmic-facing. A helical transmembrane segment spans residues Leu-274–Val-294. Topologically, residues Ser-295 to Lys-308 are extracellular. A helical transmembrane segment spans residues Leu-309 to Tyr-329. Residues Gly-330–Val-385 are Cytoplasmic-facing. The S-palmitoyl cysteine moiety is linked to residue Cys-346.

It belongs to the G-protein coupled receptor 1 family.

Its subcellular location is the cell membrane. Receptor for neuropeptide Y and peptide YY. The chain is Neuropeptide Y receptor type 2 (NPY2R) from Gallus gallus (Chicken).